The sequence spans 392 residues: Chaperone protein DnaJ 2 (392 aa).

The J domain maps to 10–75; the sequence is DFYKELGVSS…AKRKEYDETR (66 aa). Residues 161–239 form a CR-type zinc finger; it reads GVAMPLRLTS…CKGTGVTTRT (79 aa). Zn(2+) is bound by residues cysteine 174, cysteine 177, cysteine 191, cysteine 194, cysteine 213, cysteine 216, cysteine 227, and cysteine 230. CXXCXGXG motif repeat units lie at residues 174–181, 191–198, 213–220, and 227–234; these read CTNCHGSG, CPTCNGSG, CTDCRGSG, and CDECKGTG.

It belongs to the DnaJ family. In terms of assembly, homodimer. Zn(2+) serves as cofactor.

The protein localises to the cytoplasm. Participates actively in the response to hyperosmotic and heat shock by preventing the aggregation of stress-denatured proteins and by disaggregating proteins, also in an autonomous, DnaK-independent fashion. Unfolded proteins bind initially to DnaJ; upon interaction with the DnaJ-bound protein, DnaK hydrolyzes its bound ATP, resulting in the formation of a stable complex. GrpE releases ADP from DnaK; ATP binding to DnaK triggers the release of the substrate protein, thus completing the reaction cycle. Several rounds of ATP-dependent interactions between DnaJ, DnaK and GrpE are required for fully efficient folding. Also involved, together with DnaK and GrpE, in the DNA replication of plasmids through activation of initiation proteins. The polypeptide is Chaperone protein DnaJ 2 (Mycolicibacterium paratuberculosis (strain ATCC BAA-968 / K-10) (Mycobacterium paratuberculosis)).